Consider the following 261-residue polypeptide: Small ribosomal subunit protein uS2 (261 aa).

Residues 223 to 261 (EGKQGQDDSEDVEKEMADKAAAEDDEEESIEVVVEKSED) form a disordered region.

It belongs to the universal ribosomal protein uS2 family.

The protein is Small ribosomal subunit protein uS2 of Lactobacillus johnsonii (strain CNCM I-12250 / La1 / NCC 533).